Here is a 301-residue protein sequence, read N- to C-terminus: Dimethylsulfoniopropionate lyase (301 aa).

Catalysis depends on proton donor/acceptor residues Cys-111 and Cys-230.

Belongs to the aspartate/glutamate racemases family. ALMA1 subfamily. In terms of assembly, homotetramer.

The catalysed reaction is S,S-dimethyl-beta-propiothetin = acrylate + dimethyl sulfide + H(+). Functionally, mediates cleavage of dimethylsulfoniopropionate (DMSP) into dimethyl sulfide (DMS) and acrylate. DMS is the principal form by which sulfur is transported from oceans to the atmosphere and is a key component of the ocean sulfur cycle. In Durusdinium sp. clade D (Symbiodinium sp. clade D), this protein is Dimethylsulfoniopropionate lyase.